A 440-amino-acid chain; its full sequence is Adenylyltransferase and sulfurtransferase UBA4 (440 aa).

At Met-1 the chain carries N-acetylmethionine. ATP contacts are provided by residues Gly-77, Asp-98, 105–109 (SNLHR), Lys-122, and 166–167 (DS). 2 residues coordinate Zn(2+): Cys-208 and Cys-211. Residue Cys-225 is the Glycyl thioester intermediate; for adenylyltransferase activity of the active site. Residues Cys-286 and Cys-289 each coordinate Zn(2+). Ser-326 is modified (phosphoserine). Residues 339–438 (FLAKHIFLDV…YIDDIDQTIP (100 aa)) enclose the Rhodanese domain. Cys-397 (cysteine persulfide intermediate; for sulfurtransferase activity) is an active-site residue.

In the N-terminal section; belongs to the HesA/MoeB/ThiF family. UBA4 subfamily. It depends on Zn(2+) as a cofactor.

The protein localises to the cytoplasm. It is found in the cytosol. Its pathway is tRNA modification; 5-methoxycarbonylmethyl-2-thiouridine-tRNA biosynthesis. Its function is as follows. Plays a central role in 2-thiolation of mcm(5)S(2)U at tRNA wobble positions of cytosolic tRNA(Lys), tRNA(Glu) and tRNA(Gln). Acts by mediating the C-terminal thiocarboxylation of sulfur carrier URM1. Its N-terminus first activates URM1 as acyl-adenylate (-COAMP), then the persulfide sulfur on the catalytic cysteine is transferred to URM1 to form thiocarboxylation (-COSH) of its C-terminus. The reaction probably involves hydrogen sulfide that is generated from the persulfide intermediate and that acts as a nucleophile towards URM1. Subsequently, a transient disulfide bond is formed. Does not use thiosulfate as sulfur donor; NFS1 probably acting as a sulfur donor for thiocarboxylation reactions. Prior mcm(5) tRNA modification by the elongator complex is required for 2-thiolation. May also be involved in protein urmylation. The polypeptide is Adenylyltransferase and sulfurtransferase UBA4 (Saccharomyces cerevisiae (strain RM11-1a) (Baker's yeast)).